Consider the following 96-residue polypeptide: Small ribosomal subunit protein bS6 (96 aa).

This sequence belongs to the bacterial ribosomal protein bS6 family.

Its function is as follows. Binds together with bS18 to 16S ribosomal RNA. This chain is Small ribosomal subunit protein bS6, found in Streptococcus suis (strain 98HAH33).